The primary structure comprises 125 residues: Fluoride-specific ion channel FluC (125 aa).

4 helical membrane-spanning segments follow: residues Phe5 to Phe25, Phe33 to Trp53, Phe69 to Gly89, and Ile101 to Leu121. 2 residues coordinate Na(+): Gly76 and Thr79.

This sequence belongs to the fluoride channel Fluc/FEX (TC 1.A.43) family.

The protein resides in the cell inner membrane. The enzyme catalyses fluoride(in) = fluoride(out). Na(+) is not transported, but it plays an essential structural role and its presence is essential for fluoride channel function. In terms of biological role, fluoride-specific ion channel. Important for reducing fluoride concentration in the cell, thus reducing its toxicity. The chain is Fluoride-specific ion channel FluC from Desulforapulum autotrophicum (strain ATCC 43914 / DSM 3382 / VKM B-1955 / HRM2) (Desulfobacterium autotrophicum).